Here is a 380-residue protein sequence, read N- to C-terminus: Enoyl-[acyl-carrier-protein] reductase, mitochondrial (380 aa).

The transit peptide at 1–9 (MLPTFKRYM) directs the protein to the mitochondrion. The active-site Proton donor is Tyr-73. Residues Asn-157, 185–188 (TSSV), 208–210 (RDR), 283–286 (YGGM), and 308–310 (YWV) each bind NADP(+). Ser-339 carries the post-translational modification Phosphoserine. Residue Lys-373 coordinates NADP(+).

It belongs to the zinc-containing alcohol dehydrogenase family. Quinone oxidoreductase subfamily. In terms of assembly, homodimer or in a complex with other proteins. Interacts with ARS1.

Its subcellular location is the mitochondrion matrix. The catalysed reaction is a 2,3-saturated acyl-[ACP] + NADP(+) = a (2E)-enoyl-[ACP] + NADPH + H(+). The enzyme catalyses (2E,4E)-hexadienoyl-CoA + NADPH + H(+) = (4E)-hexenoyl-CoA + NADP(+). It catalyses the reaction (2E)-hexenoyl-CoA + NADPH + H(+) = hexanoyl-CoA + NADP(+). Its function is as follows. Catalyzes the NADPH-dependent reduction of trans-2-enoyl thioesters in mitochondrial fatty acid synthesis (fatty acid synthesis type II). Fatty acid chain elongation in mitochondria uses acyl carrier protein (ACP) as an acyl group carrier, but the enzyme accepts both ACP and CoA thioesters as substrates in vitro. Required for respiration and the maintenance of the mitochondrial compartment. The sequence is that of Enoyl-[acyl-carrier-protein] reductase, mitochondrial (ETR1) from Saccharomyces cerevisiae (strain ATCC 204508 / S288c) (Baker's yeast).